A 142-amino-acid polypeptide reads, in one-letter code: Hemoglobin subunit alpha-A (142 aa).

Positions 2–142 constitute a Globin domain; it reads VLSANDKSNV…VGTVLTAKYR (141 aa). O2 is bound at residue His59. His88 lines the heme b pocket.

It belongs to the globin family. As to quaternary structure, heterotetramer of two alpha chains and two beta chains. As to expression, red blood cells.

Its function is as follows. Involved in oxygen transport from the lung to the various peripheral tissues. This Columba livia (Rock dove) protein is Hemoglobin subunit alpha-A (HBAA).